The primary structure comprises 353 residues: 3-isopropylmalate dehydrogenase (353 aa).

Residue 75–88 (GPKWENLPHEHKPE) participates in NAD(+) binding. Residues arginine 95, arginine 105, arginine 133, and aspartate 219 each coordinate substrate. Mg(2+)-binding residues include aspartate 219, aspartate 243, and aspartate 247. Residue 276 to 288 (GSAPDIAGKNIAN) coordinates NAD(+).

This sequence belongs to the isocitrate and isopropylmalate dehydrogenases family. LeuB type 1 subfamily. As to quaternary structure, homodimer. Mg(2+) serves as cofactor. The cofactor is Mn(2+).

The protein resides in the cytoplasm. The enzyme catalyses (2R,3S)-3-isopropylmalate + NAD(+) = 4-methyl-2-oxopentanoate + CO2 + NADH. Its pathway is amino-acid biosynthesis; L-leucine biosynthesis; L-leucine from 3-methyl-2-oxobutanoate: step 3/4. Its function is as follows. Catalyzes the oxidation of 3-carboxy-2-hydroxy-4-methylpentanoate (3-isopropylmalate) to 3-carboxy-4-methyl-2-oxopentanoate. The product decarboxylates to 4-methyl-2 oxopentanoate. The chain is 3-isopropylmalate dehydrogenase from Chlorobium luteolum (strain DSM 273 / BCRC 81028 / 2530) (Pelodictyon luteolum).